The chain runs to 104 residues: Large ribosomal subunit protein uL23 (104 aa).

This sequence belongs to the universal ribosomal protein uL23 family. Part of the 50S ribosomal subunit. Contacts protein L29, and trigger factor when it is bound to the ribosome.

Functionally, one of the early assembly proteins it binds 23S rRNA. One of the proteins that surrounds the polypeptide exit tunnel on the outside of the ribosome. Forms the main docking site for trigger factor binding to the ribosome. The polypeptide is Large ribosomal subunit protein uL23 (Ralstonia pickettii (strain 12J)).